The sequence spans 401 residues: 2-amino-3-carboxymuconate-6-semialdehyde decarboxylase (401 aa).

Zn(2+) contacts are provided by H18 and H20. R59 lines the substrate pocket. Zn(2+) is bound by residues H234 and D352.

This sequence belongs to the metallo-dependent hydrolases superfamily. ACMSD family. As to quaternary structure, monomer.

It catalyses the reaction 2-amino-3-carboxymuconate 6-semialdehyde + H(+) = 2-aminomuconate 6-semialdehyde + CO2. Its pathway is secondary metabolite metabolism; quinolate metabolism. Converts alpha-amino-beta-carboxymuconate-epsilon-semialdehyde (ACMS) to alpha-aminomuconate semialdehyde (AMS). This is 2-amino-3-carboxymuconate-6-semialdehyde decarboxylase from Caenorhabditis elegans.